Consider the following 217-residue polypeptide: Non-structural protein NS3 (217 aa).

This sequence belongs to the orbivirus NS3 family.

May play a role in the release of virions from infected cells. This African horse sickness virus (AHSV) protein is Non-structural protein NS3 (Segment-10).